The following is a 108-amino-acid chain: Class I hydrophobin hgfII (108 aa).

Residues 1-19 (MFSRIAAVSFLALPLLAAA) form the signal peptide. 4 disulfide bridges follow: C28–C89, C35–C83, C36–C69, and C90–C103. N92 is a glycosylation site (N-linked (GlcNAc...) asparagine).

The protein belongs to the fungal hydrophobin family. As to quaternary structure, self-assembles to form functional amyloid fibrils called rodlets with a diameter of 15-30 nm. Self-assembly into fibrillar rodlets occurs spontaneously at hydrophobic:hydrophilic interfaces and the rodlets further associate laterally to form amphipathic monolayers. As to expression, highky expressed in hyphae cultured in liquid medium.

The protein localises to the secreted. The protein resides in the cell wall. Its function is as follows. Aerial growth, conidiation, and dispersal of filamentous fungi in the environment rely upon a capability of their secreting small amphipathic proteins called hydrophobins (HPBs) with low sequence identity. Class I can self-assemble into an outermost layer of rodlet bundles on aerial cell surfaces, conferring cellular hydrophobicity that supports fungal growth, development and dispersal; whereas Class II form highly ordered films at water-air interfaces through intermolecular interactions but contribute nothing to the rodlet structure. HgfII is a class I hydrophobin that is involved in cell surface hydrophobicity and might play a key role during the growth and development of hyphae cultured in liquid medium. This chain is Class I hydrophobin hgfII, found in Grifola frondosa (Maitake).